The chain runs to 286 residues: MQAEFKLRSKILLQPLVLLHIIDAYERRPKDCTQVIGTLLGRNNPESGHLEISNCFTLLHKDYPNSDRIDVDLQYANDMYELNQLTYPQEKIIGWYATGKEVSRSAVNLHEYYARECADGNPMHLLIDTSLRGQRMMMRLYTAVVMGVPNGTKGLMFSLLPVEMSSGNPESVALNLMKKNALQPTKQVGRILPELVQVVDITRDLQTKLDLVLRYVNETLARKRTPNNTVGRALHDALTSVPLVDAESFRMMFNANVRDMLMSITLATMIKAQLKISESVIAMPDL.

An MPN domain is found at 11–147; that stretch reads ILLQPLVLLH…MRLYTAVVMG (137 aa).

Belongs to the eIF-3 subunit F family. In terms of assembly, component of the eukaryotic translation initiation factor 3 (eIF-3) complex. The eIF-3 complex interacts with pix.

The protein resides in the cytoplasm. In terms of biological role, component of the eukaryotic translation initiation factor 3 (eIF-3) complex, which is involved in protein synthesis of a specialized repertoire of mRNAs and, together with other initiation factors, stimulates binding of mRNA and methionyl-tRNAi to the 40S ribosome. The eIF-3 complex specifically targets and initiates translation of a subset of mRNAs involved in cell proliferation. In Drosophila willistoni (Fruit fly), this protein is Eukaryotic translation initiation factor 3 subunit F-2.